The chain runs to 356 residues: Thymidine kinase (356 aa).

The interval 1–29 is disordered; the sequence is MMDSRATYVPPKKISESNSNAEEDPTDCS. Position 61–68 (61–68) interacts with ATP; the sequence is GCVGVGKT. Glutamate 86 (proton acceptor) is an active-site residue. Glutamine 122 serves as a coordination point for substrate. Residue arginine 208 participates in ATP binding. Arginine 214 provides a ligand contact to substrate.

This sequence belongs to the herpesviridae thymidine kinase family. As to quaternary structure, homodimer.

It carries out the reaction thymidine + ATP = dTMP + ADP + H(+). Its function is as follows. Catalyzes the transfer of the gamma-phospho group of ATP to thymidine to generate dTMP in the salvage pathway of pyrimidine synthesis. The dTMP serves as a substrate for DNA polymerase during viral DNA replication. Allows the virus to be reactivated and to grow in non-proliferative cells lacking a high concentration of phosphorylated nucleic acid precursors. This chain is Thymidine kinase, found in Elephas maximus (Indian elephant).